Reading from the N-terminus, the 723-residue chain is Malate synthase G (723 aa).

Acetyl-CoA contacts are provided by residues valine 118, 125–126, serine 274, and arginine 311; that span reads RY. Catalysis depends on arginine 338, which acts as the Proton acceptor. Glyoxylate is bound by residues arginine 338, glutamate 427, and 452-455; that span reads GFLD. Residues glutamate 427 and aspartate 455 each coordinate Mg(2+). An acetyl-CoA-binding site is contributed by proline 536. Cysteine 617 is modified (cysteine sulfenic acid (-SOH)). Catalysis depends on aspartate 631, which acts as the Proton donor. Cysteine 688 is modified (cysteine sulfenic acid (-SOH)).

The protein belongs to the malate synthase family. GlcB subfamily. In terms of assembly, monomer. The cofactor is Mg(2+).

The protein localises to the cytoplasm. The catalysed reaction is glyoxylate + acetyl-CoA + H2O = (S)-malate + CoA + H(+). Its pathway is carbohydrate metabolism; glyoxylate cycle; (S)-malate from isocitrate: step 2/2. In terms of biological role, involved in the glycolate utilization. Catalyzes the condensation and subsequent hydrolysis of acetyl-coenzyme A (acetyl-CoA) and glyoxylate to form malate and CoA. This is Malate synthase G from Escherichia coli O6:H1 (strain CFT073 / ATCC 700928 / UPEC).